A 227-amino-acid polypeptide reads, in one-letter code: Cytochrome c oxidase subunit 2 (227 aa).

Topologically, residues 1–14 (MAYPFQLGFQDATS) are mitochondrial intermembrane. Residues 15–45 (PIMEELLHFHDHTLMIVFLISSLVLYIISSM) traverse the membrane as a helical segment. The Mitochondrial matrix segment spans residues 46–59 (LTTKLTHTSTMDAQ). The chain crosses the membrane as a helical span at residues 60-87 (EVETIWTILPAIILILIALPSLRILYMM). The Mitochondrial intermembrane segment spans residues 88–227 (DEINNPSLTV…HFEEWSASML (140 aa)). H161, C196, E198, C200, H204, and M207 together coordinate Cu cation. E198 serves as a coordination point for Mg(2+).

This sequence belongs to the cytochrome c oxidase subunit 2 family. As to quaternary structure, component of the cytochrome c oxidase (complex IV, CIV), a multisubunit enzyme composed of 14 subunits. The complex is composed of a catalytic core of 3 subunits MT-CO1, MT-CO2 and MT-CO3, encoded in the mitochondrial DNA, and 11 supernumerary subunits COX4I, COX5A, COX5B, COX6A, COX6B, COX6C, COX7A, COX7B, COX7C, COX8 and NDUFA4, which are encoded in the nuclear genome. The complex exists as a monomer or a dimer and forms supercomplexes (SCs) in the inner mitochondrial membrane with NADH-ubiquinone oxidoreductase (complex I, CI) and ubiquinol-cytochrome c oxidoreductase (cytochrome b-c1 complex, complex III, CIII), resulting in different assemblies (supercomplex SCI(1)III(2)IV(1) and megacomplex MCI(2)III(2)IV(2)). Found in a complex with TMEM177, COA6, COX18, COX20, SCO1 and SCO2. Interacts with TMEM177 in a COX20-dependent manner. Interacts with COX20. Interacts with COX16. Cu cation is required as a cofactor.

It is found in the mitochondrion inner membrane. It catalyses the reaction 4 Fe(II)-[cytochrome c] + O2 + 8 H(+)(in) = 4 Fe(III)-[cytochrome c] + 2 H2O + 4 H(+)(out). In terms of biological role, component of the cytochrome c oxidase, the last enzyme in the mitochondrial electron transport chain which drives oxidative phosphorylation. The respiratory chain contains 3 multisubunit complexes succinate dehydrogenase (complex II, CII), ubiquinol-cytochrome c oxidoreductase (cytochrome b-c1 complex, complex III, CIII) and cytochrome c oxidase (complex IV, CIV), that cooperate to transfer electrons derived from NADH and succinate to molecular oxygen, creating an electrochemical gradient over the inner membrane that drives transmembrane transport and the ATP synthase. Cytochrome c oxidase is the component of the respiratory chain that catalyzes the reduction of oxygen to water. Electrons originating from reduced cytochrome c in the intermembrane space (IMS) are transferred via the dinuclear copper A center (CU(A)) of subunit 2 and heme A of subunit 1 to the active site in subunit 1, a binuclear center (BNC) formed by heme A3 and copper B (CU(B)). The BNC reduces molecular oxygen to 2 water molecules using 4 electrons from cytochrome c in the IMS and 4 protons from the mitochondrial matrix. The chain is Cytochrome c oxidase subunit 2 (MT-CO2) from Equus caballus (Horse).